Consider the following 173-residue polypeptide: Co-chaperone protein HscB (173 aa).

Residues 2-74 (DYFTLFGLPV…LKRAEYMLSL (73 aa)) form the J domain.

It belongs to the HscB family. As to quaternary structure, interacts with HscA and stimulates its ATPase activity. Interacts with IscU.

Co-chaperone involved in the maturation of iron-sulfur cluster-containing proteins. Seems to help targeting proteins to be folded toward HscA. The sequence is that of Co-chaperone protein HscB from Serratia proteamaculans (strain 568).